An 81-amino-acid polypeptide reads, in one-letter code: Small ribosomal subunit protein bS16 (81 aa).

The protein belongs to the bacterial ribosomal protein bS16 family.

This Alkaliphilus oremlandii (strain OhILAs) (Clostridium oremlandii (strain OhILAs)) protein is Small ribosomal subunit protein bS16.